The sequence spans 336 residues: tRNA N6-adenosine threonylcarbamoyltransferase (336 aa).

Fe cation is bound by residues His114 and His118. Substrate is bound by residues 136–140, Asp169, Gly182, Asp186, and Asn275; that span reads LVSGG. Asp301 serves as a coordination point for Fe cation.

It belongs to the KAE1 / TsaD family. Requires Fe(2+) as cofactor.

It is found in the cytoplasm. It catalyses the reaction L-threonylcarbamoyladenylate + adenosine(37) in tRNA = N(6)-L-threonylcarbamoyladenosine(37) in tRNA + AMP + H(+). In terms of biological role, required for the formation of a threonylcarbamoyl group on adenosine at position 37 (t(6)A37) in tRNAs that read codons beginning with adenine. Is involved in the transfer of the threonylcarbamoyl moiety of threonylcarbamoyl-AMP (TC-AMP) to the N6 group of A37, together with TsaE and TsaB. TsaD likely plays a direct catalytic role in this reaction. This chain is tRNA N6-adenosine threonylcarbamoyltransferase, found in Streptococcus mutans serotype c (strain ATCC 700610 / UA159).